A 1067-amino-acid polypeptide reads, in one-letter code: Isoleucine--tRNA ligase (1067 aa).

Residues 49–59 carry the 'HIGH' region motif; it reads PYVSGAIHLGT. The short motif at 625-629 is the 'KMSKS' region element; the sequence is KMSKS. Lys-628 lines the ATP pocket.

It belongs to the class-I aminoacyl-tRNA synthetase family. IleS type 2 subfamily. As to quaternary structure, monomer. Requires Zn(2+) as cofactor.

It is found in the cytoplasm. It carries out the reaction tRNA(Ile) + L-isoleucine + ATP = L-isoleucyl-tRNA(Ile) + AMP + diphosphate. Catalyzes the attachment of isoleucine to tRNA(Ile). As IleRS can inadvertently accommodate and process structurally similar amino acids such as valine, to avoid such errors it has two additional distinct tRNA(Ile)-dependent editing activities. One activity is designated as 'pretransfer' editing and involves the hydrolysis of activated Val-AMP. The other activity is designated 'posttransfer' editing and involves deacylation of mischarged Val-tRNA(Ile). The chain is Isoleucine--tRNA ligase from Pyrococcus abyssi (strain GE5 / Orsay).